A 596-amino-acid polypeptide reads, in one-letter code: Nitrite reductase (596 aa).

A signal peptide spans 1–29 (MRQRTPFARPGLLASAALALVLGPLAASA). Residues 30–76 (QEQVAPPKDPAAALEDHKTRTDNRYEPSLDNLAQQDVAAPGAPEGVS) are N-terminal tail. H46 lines the heme c pocket. Heme d1 contacts are provided by Y54 and S57. Residues 77 to 162 (ALSDAQYNEA…ANYLLLDPAA (86 aa)) enclose the Cytochrome c domain. Heme c-binding residues include C94, C97, H98, K108, and Y122. 10 residues coordinate heme d1: W138, R203, H229, R232, R245, R272, Y292, R420, Q536, and T583. The interval 163–596 (PPEFGMKEMR…NVYNTMTDTY (434 aa)) is D1-heme domain.

In terms of assembly, homodimer. Heme c is required as a cofactor. Requires heme as cofactor.

The protein localises to the periplasm. The catalysed reaction is nitric oxide + Fe(III)-[cytochrome c] + H2O = Fe(II)-[cytochrome c] + nitrite + 2 H(+). It carries out the reaction A + NH4(+) + H2O = hydroxylamine + AH2 + H(+). This is Nitrite reductase (nirS) from Paracoccus pantotrophus (Thiosphaera pantotropha).